We begin with the raw amino-acid sequence, 217 residues long: MOB kinase activator 3A (217 aa).

Zn(2+)-binding residues include Cys-83, Cys-88, His-165, and His-170.

This sequence belongs to the MOB1/phocein family.

May regulate the activity of kinases. The polypeptide is MOB kinase activator 3A (MOB3A) (Homo sapiens (Human)).